Reading from the N-terminus, the 554-residue chain is Probable ATP-binding cassette sub-family F member 3 homolog (554 aa).

ABC transporter domains are found at residues 89–285 and 351–554; these read GDLH…ASAR and IEFV…GLGV. Residues 122 to 129 and 383 to 390 contribute to the ATP site; these read GRNGIGKT and GANGQGKS.

The protein belongs to the ABC transporter superfamily. ABCF family. EF3 subfamily.

The sequence is that of Probable ATP-binding cassette sub-family F member 3 homolog from Encephalitozoon cuniculi (strain GB-M1) (Microsporidian parasite).